Reading from the N-terminus, the 321-residue chain is Beta-ketoacyl-[acyl-carrier-protein] synthase III (321 aa).

Residues C113 and H246 contribute to the active site. The segment at 247 to 251 (QANVR) is ACP-binding. N276 is a catalytic residue.

This sequence belongs to the thiolase-like superfamily. FabH family. As to quaternary structure, homodimer.

The protein resides in the cytoplasm. It carries out the reaction malonyl-[ACP] + acetyl-CoA + H(+) = 3-oxobutanoyl-[ACP] + CO2 + CoA. It participates in lipid metabolism; fatty acid biosynthesis. Its function is as follows. Catalyzes the condensation reaction of fatty acid synthesis by the addition to an acyl acceptor of two carbons from malonyl-ACP. Catalyzes the first condensation reaction which initiates fatty acid synthesis and may therefore play a role in governing the total rate of fatty acid production. Possesses both acetoacetyl-ACP synthase and acetyl transacylase activities. Its substrate specificity determines the biosynthesis of branched-chain and/or straight-chain of fatty acids. The polypeptide is Beta-ketoacyl-[acyl-carrier-protein] synthase III (Enterococcus faecalis (strain ATCC 700802 / V583)).